A 489-amino-acid chain; its full sequence is Cobyric acid synthase (489 aa).

In terms of domain architecture, GATase cobBQ-type spans 251–439 (RLTVVAPVYP…LHGLFDTPAA (189 aa)). Cysteine 332 acts as the Nucleophile in catalysis. The active site involves histidine 431.

Belongs to the CobB/CobQ family. CobQ subfamily.

Its pathway is cofactor biosynthesis; adenosylcobalamin biosynthesis. Catalyzes amidations at positions B, D, E, and G on adenosylcobyrinic A,C-diamide. NH(2) groups are provided by glutamine, and one molecule of ATP is hydrogenolyzed for each amidation. In Aromatoleum aromaticum (strain DSM 19018 / LMG 30748 / EbN1) (Azoarcus sp. (strain EbN1)), this protein is Cobyric acid synthase.